Consider the following 300-residue polypeptide: MALLDLKQFYELREGCDDKGILVMDGDWLVFQAMSAAEFDASWEEEIWHRCCDHAKARQILEDSIKSYETRKKAWAGAPIVLAFTDSVNWRKELVDPNYKANRKAVKKPVGYFEFLDALFEREEFYCIREPMLEGDDVMGVIASNPSAFGARKAVIISCDKDFKTIPNCDFLWCTTGNILTQTEESADWWHLFQTIKGDITDGYSGIAGWGDTAEDFLNNPFITEPKTSVLKSGKNKGQEVTKWVKRDPEPHETLWDCIKSIGAKAGMTEEDIIKQGQMARILRFNEYNFIDKEIYLWRP.

The catalysed reaction is Exonucleolytic cleavage in the 5'- to 3'-direction to yield nucleoside 5'-phosphates.. In terms of biological role, plays an essential role in phage DNA replication by participating in the removal of DNA-linked RNA primers. Participates also in T7 DNA packaging, host DNA degradation and phage genetic recombination. The polypeptide is Exonuclease (Escherichia phage T7 (Bacteriophage T7)).